The sequence spans 337 residues: tRNA N6-adenosine threonylcarbamoyltransferase (337 aa).

2 residues coordinate Fe cation: H111 and H115. Substrate is bound by residues 134–138, D167, G180, and N272; that span reads LVSGG. D300 contributes to the Fe cation binding site.

Belongs to the KAE1 / TsaD family. Requires Fe(2+) as cofactor.

The protein resides in the cytoplasm. It carries out the reaction L-threonylcarbamoyladenylate + adenosine(37) in tRNA = N(6)-L-threonylcarbamoyladenosine(37) in tRNA + AMP + H(+). In terms of biological role, required for the formation of a threonylcarbamoyl group on adenosine at position 37 (t(6)A37) in tRNAs that read codons beginning with adenine. Is involved in the transfer of the threonylcarbamoyl moiety of threonylcarbamoyl-AMP (TC-AMP) to the N6 group of A37, together with TsaE and TsaB. TsaD likely plays a direct catalytic role in this reaction. In Salmonella schwarzengrund (strain CVM19633), this protein is tRNA N6-adenosine threonylcarbamoyltransferase.